Reading from the N-terminus, the 374-residue chain is Ribosomal RNA large subunit methyltransferase G (374 aa).

Belongs to the methyltransferase superfamily. RlmG family.

It is found in the cytoplasm. The catalysed reaction is guanosine(1835) in 23S rRNA + S-adenosyl-L-methionine = N(2)-methylguanosine(1835) in 23S rRNA + S-adenosyl-L-homocysteine + H(+). Functionally, specifically methylates the guanine in position 1835 (m2G1835) of 23S rRNA. This chain is Ribosomal RNA large subunit methyltransferase G, found in Pseudomonas entomophila (strain L48).